The primary structure comprises 402 residues: Deacetylase Oant_2987 (402 aa).

Zn(2+) is bound by residues His70, His72, Lys168, His201, His224, and Asp284. At Lys168 the chain carries N6-carboxylysine.

This sequence belongs to the metallo-dependent hydrolases superfamily. Atu3266/EF_0837 deacetylase family. The cofactor is Zn(2+).

Esterase that catalyzes the deacetylation of acetyl-(R)-mandelate (in vitro). Can also hydrolyze acetyl glycolate, but with lower efficiency. Has very low N-acetyl-D-amino acid deacetylase activity with N-acetyl-D-serine and N-acetyl-D-threonine (in vitro). Theoretical substrate docking studies suggest that other N-acetylated amino acids may optimally occupy the active site and may in fact be the physiological substrates. The sequence is that of Deacetylase Oant_2987 from Brucella anthropi (strain ATCC 49188 / DSM 6882 / CCUG 24695 / JCM 21032 / LMG 3331 / NBRC 15819 / NCTC 12168 / Alc 37) (Ochrobactrum anthropi).